The primary structure comprises 400 residues: Tryptophan--tRNA ligase (400 aa).

Residues 12–20 carry the 'HIGH' region motif; it reads PTGALHLGH. The interval 173–241 is insert; that stretch reads REPGFEQKAL…RLFGYLEGAR (69 aa). Residues 265-269 carry the 'KMSKS' region motif; that stretch reads KMSKS. Lys268 is a binding site for ATP. Positions 280–305 are disordered; it reads KASVEKKVRTMPTDPARVRRTDPGDP. Positions 295–304 are enriched in basic and acidic residues; it reads ARVRRTDPGD.

Belongs to the class-I aminoacyl-tRNA synthetase family. In terms of assembly, homodimer.

The protein resides in the cytoplasm. The enzyme catalyses tRNA(Trp) + L-tryptophan + ATP = L-tryptophyl-tRNA(Trp) + AMP + diphosphate + H(+). In Ralstonia nicotianae (strain ATCC BAA-1114 / GMI1000) (Ralstonia solanacearum), this protein is Tryptophan--tRNA ligase (trpS).